A 336-amino-acid polypeptide reads, in one-letter code: MKPKVFITRAIPENGINMLEEEFEVEVWEEEREIPREKLLEKVKDVDALVTMLSERIDQEVFENAPRLRIVANYAVGYDNIDVEEATRRGIYVTNTPDVLTNATADHAFALLLATARHVVKGDKFVRSGEWKRKGIAWHPKWFLGYELYGKTIGIVGFGRIGQAIARRAKGFNMRILYYSRTRKSQAEKELGAEYRPLEEVLKESDFVILAVPLTKETMYMINEERLKLMKPTAILVNIARGKVVDTKALIKALKEGWIAGAGLDVFEEEPYYNEELFSLDNVVLTPHIGSATFEAREAMAELVARNLIAFKRGEIPPTLVNKEVIKIRKPGFNEQ.

Residues 158–161, 180–182, and 239–241 contribute to the NADP(+) site; these read FGRI, SRT, and IAR. Residues R241 and E270 contribute to the active site. The Proton donor role is filled by H288. 288 to 290 serves as a coordination point for NADP(+); it reads HIG.

Belongs to the D-isomer specific 2-hydroxyacid dehydrogenase family. GyaR subfamily. In terms of assembly, homodimer.

The protein localises to the cytoplasm. It carries out the reaction glycolate + NAD(+) = glyoxylate + NADH + H(+). The sequence is that of Glyoxylate reductase from Pyrococcus furiosus (strain ATCC 43587 / DSM 3638 / JCM 8422 / Vc1).